The chain runs to 314 residues: GTP cyclohydrolase FolE2 (314 aa).

The tract at residues 290–314 is disordered; the sequence is DASAWSAPQAAAPDQQESFATGNER. Residues 291 to 304 show a composition bias toward low complexity; the sequence is ASAWSAPQAAAPDQ. Residues 305–314 are compositionally biased toward polar residues; sequence QESFATGNER.

It belongs to the GTP cyclohydrolase IV family.

The enzyme catalyses GTP + H2O = 7,8-dihydroneopterin 3'-triphosphate + formate + H(+). It functions in the pathway cofactor biosynthesis; 7,8-dihydroneopterin triphosphate biosynthesis; 7,8-dihydroneopterin triphosphate from GTP: step 1/1. Converts GTP to 7,8-dihydroneopterin triphosphate. This chain is GTP cyclohydrolase FolE2, found in Pseudomonas putida (strain ATCC 47054 / DSM 6125 / CFBP 8728 / NCIMB 11950 / KT2440).